The chain runs to 583 residues: SHC-transforming protein 1 (583 aa).

The residue at position 1 (M1) is an N-acetylmethionine. The segment at 1–92 is disordered; sequence MDLLPPKPKY…EPGRAADDGE (92 aa). A compositionally biased stretch (low complexity) spans 16-44; it reads ESLSSLEEGASGSTPPEELPSPSASSLGP. 2 positions are modified to phosphoserine: S36 and S139. K154 carries the N6-acetyllysine modification. In terms of domain architecture, PID spans 156–339; it reads MGPGVSYLVR…AGFDGSAWDE (184 aa). The tract at residues 340–487 is CH1; it reads EEEEPPDHQY…SMAEQLRGEP (148 aa). Phosphotyrosine occurs at positions 349 and 350. Residues 372–384 show a composition bias toward low complexity; it reads AAPGAARPTAPNA. Residues 372-415 form a disordered region; that stretch reads AAPGAARPTAPNAQTPSHLGATLPVGQPVGGDPEVRKQMPPPPP. Y427 carries the post-translational modification Phosphotyrosine. S453 bears the Phosphoserine mark. In terms of domain architecture, SH2 spans 488–579; the sequence is WFHGKLSRRE…GSELCLQQPV (92 aa).

As to quaternary structure, interacts with CPNE3; this interaction may mediate the binding of CPNE3 with ERBB2. Interacts with the NPXY motif of tyrosine-phosphorylated IGF1R and INSR in vitro via the PID domain. Once activated, binds to GRB2. Interacts with tyrosine-phosphorylated CD3T and DDR2. Interacts with the N-terminal region of SH2B2. Interacts with phosphorylated LRP1 and IRS4. Interacts with INPP5D/SHIP1 and INPPL1/SHIP2. Interacts with TRIM31. Interacts with PTPN6/SHP (tyrosine phosphorylated). Identified in a complex containing FGFR4, NCAM1, CDH2, PLCG1, FRS2, SRC, SHC1, GAP43 and CTT. Interacts with ALK, GAB2, GRB7 and KIT. Interacts with FLT4 (tyrosine-phosphorylated). Interacts with EPHB1 and GRB2; activates the MAPK/ERK cascade to regulate cell migration. Interacts with PDGFRB (tyrosine-phosphorylated). Interacts with ERBB4. Interacts with TEK/TIE2 (tyrosine-phosphorylated). Interacts with the Trk receptors NTRK1, NTRK2 and NTRK3; in a phosphotyrosine-dependent manner. Interacts with PTK2/FAK1. Interacts with CEACAM1; this interaction is CEACAM1-phosphorylation-dependent and mediates interaction with EGFR or INSR resulting in decrease coupling of SHC1 to the MAPK3/ERK1-MAPK1/ERK2 pathway. Interacts (via PID domain) with PEAK1 (when phosphorylated at 'Tyr-1188'). Found in a complex with PPP1CA, PPP1CC, SHC1 and PEAK1. In terms of assembly, (Microbial infection) Interacts with herpes simplex virus 1 UL46. Phosphorylated by activated epidermal growth factor receptor. Phosphorylated in response to FLT4 and KIT signaling. Isoform p46Shc and isoform p52Shc are phosphorylated on tyrosine residues of the Pro-rich domain. Isoform p66Shc is phosphorylated on Ser-36 by PRKCB upon treatment with insulin, hydrogen peroxide or irradiation with ultraviolet light. Tyrosine phosphorylated in response to FLT3 signaling. Tyrosine phosphorylated by activated PTK2B/PYK2. Tyrosine phosphorylated by ligand-activated ALK. Tyrosine phosphorylated by ligand-activated PDGFRB. Tyrosine phosphorylated by TEK/TIE2. May be tyrosine phosphorylated by activated PTK2/FAK1; tyrosine phosphorylation was seen in an astrocytoma biopsy, where PTK2/FAK1 kinase activity is high, but not in normal brain tissue. Isoform p52Shc dephosphorylation by PTPN2 may regulate interaction with GRB2. As to expression, widely expressed. Expressed in neural stem cells but absent in mature neurons.

It localises to the cytoplasm. It is found in the cell junction. Its subcellular location is the focal adhesion. The protein localises to the mitochondrion matrix. The protein resides in the mitochondrion. Functionally, signaling adapter that couples activated growth factor receptors to signaling pathways. Participates in a signaling cascade initiated by activated KIT and KITLG/SCF. Isoform p46Shc and isoform p52Shc, once phosphorylated, couple activated receptor tyrosine kinases to Ras via the recruitment of the GRB2/SOS complex and are implicated in the cytoplasmic propagation of mitogenic signals. Isoform p46Shc and isoform p52Shc may thus function as initiators of the Ras signaling cascade in various non-neuronal systems. Isoform p66Shc does not mediate Ras activation, but is involved in signal transduction pathways that regulate the cellular response to oxidative stress and life span. Isoform p66Shc acts as a downstream target of the tumor suppressor p53 and is indispensable for the ability of stress-activated p53 to induce elevation of intracellular oxidants, cytochrome c release and apoptosis. The expression of isoform p66Shc has been correlated with life span. Participates in signaling downstream of the angiopoietin receptor TEK/TIE2, and plays a role in the regulation of endothelial cell migration and sprouting angiogenesis. This chain is SHC-transforming protein 1 (SHC1), found in Homo sapiens (Human).